A 223-amino-acid polypeptide reads, in one-letter code: Arginine kinase (223 aa).

The Phosphagen kinase C-terminal domain occupies 56 to 222 (FVISTRVRLI…LELIKIEKEM (167 aa)). ATP contacts are provided by residues 59–63 (STRVR) and histidine 68. Cysteine 141 is an L-arginine binding site. ATP contacts are provided by residues 150 to 154 (RASVH) and 175 to 180 (RGTRGE). Glutamate 180 lines the L-arginine pocket.

The protein belongs to the ATP:guanido phosphotransferase family.

It catalyses the reaction L-arginine + ATP = N(omega)-phospho-L-arginine + ADP + H(+). The sequence is that of Arginine kinase from Chionoecetes opilio (Atlantic snow crab).